The sequence spans 1396 residues: DNA-directed RNA polymerase subunit beta' (1396 aa).

Positions 73, 75, 88, and 91 each coordinate Zn(2+). Mg(2+)-binding residues include aspartate 467, aspartate 469, and aspartate 471. The Zn(2+) site is built by cysteine 817, cysteine 891, cysteine 898, and cysteine 901.

Belongs to the RNA polymerase beta' chain family. As to quaternary structure, the RNAP catalytic core consists of 2 alpha, 1 beta, 1 beta' and 1 omega subunit. When a sigma factor is associated with the core the holoenzyme is formed, which can initiate transcription. Mg(2+) is required as a cofactor. Requires Zn(2+) as cofactor.

The enzyme catalyses RNA(n) + a ribonucleoside 5'-triphosphate = RNA(n+1) + diphosphate. DNA-dependent RNA polymerase catalyzes the transcription of DNA into RNA using the four ribonucleoside triphosphates as substrates. The polypeptide is DNA-directed RNA polymerase subunit beta' (Orientia tsutsugamushi (strain Boryong) (Rickettsia tsutsugamushi)).